Reading from the N-terminus, the 554-residue chain is Glucose-6-phosphate isomerase (554 aa).

Glu-359 acts as the Proton donor in catalysis. Active-site residues include His-390 and Lys-518.

Belongs to the GPI family.

It localises to the cytoplasm. The enzyme catalyses alpha-D-glucose 6-phosphate = beta-D-fructose 6-phosphate. Its pathway is carbohydrate biosynthesis; gluconeogenesis. The protein operates within carbohydrate degradation; glycolysis; D-glyceraldehyde 3-phosphate and glycerone phosphate from D-glucose: step 2/4. In terms of biological role, catalyzes the reversible isomerization of glucose-6-phosphate to fructose-6-phosphate. This is Glucose-6-phosphate isomerase from Pseudomonas entomophila (strain L48).